A 469-amino-acid chain; its full sequence is Adenosylhomocysteinase (469 aa).

Residues Thr-63, Asp-139, and Glu-164 each coordinate substrate. 165–167 (TTT) lines the NAD(+) pocket. Positions 194 and 198 each coordinate substrate. NAD(+) is bound by residues Asn-199, 228–233 (GYGDVG), Glu-251, Asn-300, 321–323 (IGH), and Asn-375.

It belongs to the adenosylhomocysteinase family. NAD(+) serves as cofactor.

Its subcellular location is the cytoplasm. The enzyme catalyses S-adenosyl-L-homocysteine + H2O = L-homocysteine + adenosine. It participates in amino-acid biosynthesis; L-homocysteine biosynthesis; L-homocysteine from S-adenosyl-L-homocysteine: step 1/1. In terms of biological role, may play a key role in the regulation of the intracellular concentration of adenosylhomocysteine. This chain is Adenosylhomocysteinase, found in Pseudomonas entomophila (strain L48).